The primary structure comprises 145 residues: Probable disulfide formation protein (145 aa).

Residues 9–28 (ENLLLLIWVQAFLALAGSLF) traverse the membrane as a helical segment. An intrachain disulfide couples cysteine 38 to cysteine 41. The next 2 membrane-spanning stretches (helical) occupy residues 43 to 62 (YQRILMYPLVLIYGVAAIKK) and 69 to 86 (PGLFMSGIGLLVSTYHYL). Cysteine 100 and cysteine 106 are oxidised to a cystine. Residues 115 to 137 (GFISIPFMAGVAFLIIFVLHLLI) form a helical membrane-spanning segment.

This sequence belongs to the DsbB family. BdbC subfamily.

It is found in the cell membrane. In terms of biological role, required for disulfide bond formation in some proteins. The polypeptide is Probable disulfide formation protein (Oceanobacillus iheyensis (strain DSM 14371 / CIP 107618 / JCM 11309 / KCTC 3954 / HTE831)).